Here is a 342-residue protein sequence, read N- to C-terminus: UDP-3-O-acylglucosamine N-acyltransferase (342 aa).

The active-site Proton acceptor is His241.

The protein belongs to the transferase hexapeptide repeat family. LpxD subfamily. In terms of assembly, homotrimer.

The enzyme catalyses a UDP-3-O-[(3R)-3-hydroxyacyl]-alpha-D-glucosamine + a (3R)-hydroxyacyl-[ACP] = a UDP-2-N,3-O-bis[(3R)-3-hydroxyacyl]-alpha-D-glucosamine + holo-[ACP] + H(+). It functions in the pathway bacterial outer membrane biogenesis; LPS lipid A biosynthesis. Functionally, catalyzes the N-acylation of UDP-3-O-acylglucosamine using 3-hydroxyacyl-ACP as the acyl donor. Is involved in the biosynthesis of lipid A, a phosphorylated glycolipid that anchors the lipopolysaccharide to the outer membrane of the cell. This chain is UDP-3-O-acylglucosamine N-acyltransferase, found in Pasteurella multocida (strain Pm70).